Here is a 357-residue protein sequence, read N- to C-terminus: S-adenosylmethionine:tRNA ribosyltransferase-isomerase (357 aa).

The protein belongs to the QueA family. Monomer.

Its subcellular location is the cytoplasm. The enzyme catalyses 7-aminomethyl-7-carbaguanosine(34) in tRNA + S-adenosyl-L-methionine = epoxyqueuosine(34) in tRNA + adenine + L-methionine + 2 H(+). It functions in the pathway tRNA modification; tRNA-queuosine biosynthesis. Its function is as follows. Transfers and isomerizes the ribose moiety from AdoMet to the 7-aminomethyl group of 7-deazaguanine (preQ1-tRNA) to give epoxyqueuosine (oQ-tRNA). The polypeptide is S-adenosylmethionine:tRNA ribosyltransferase-isomerase (Buchnera aphidicola subsp. Acyrthosiphon pisum (strain APS) (Acyrthosiphon pisum symbiotic bacterium)).